The following is a 206-amino-acid chain: Large ribosomal subunit protein uL4 (206 aa).

A disordered region spans residues 46 to 77 (GTRAQKDREQVRHSTKKPFKQKGTGRARAGMT). The segment covering 58–70 (HSTKKPFKQKGTG) has biased composition (basic residues).

The protein belongs to the universal ribosomal protein uL4 family. Part of the 50S ribosomal subunit.

Functionally, one of the primary rRNA binding proteins, this protein initially binds near the 5'-end of the 23S rRNA. It is important during the early stages of 50S assembly. It makes multiple contacts with different domains of the 23S rRNA in the assembled 50S subunit and ribosome. Forms part of the polypeptide exit tunnel. This is Large ribosomal subunit protein uL4 from Polaromonas naphthalenivorans (strain CJ2).